A 184-amino-acid chain; its full sequence is C-phycoerythrin beta chain (184 aa).

2 residues coordinate (2R,3E)-phycoerythrobilin: cysteine 48 and cysteine 59. Residue asparagine 70 is modified to N4-methylasparagine. (2R,3E)-phycoerythrobilin contacts are provided by cysteine 80 and cysteine 165.

It belongs to the phycobiliprotein family. Heterodimer of an alpha and a beta chain. In terms of processing, contains three covalently linked bilin chromophores.

Its subcellular location is the cellular thylakoid membrane. In terms of biological role, light-harvesting photosynthetic bile pigment-protein from the phycobiliprotein complex. This is C-phycoerythrin beta chain (cpeB) from Microchaete diplosiphon (Fremyella diplosiphon).